An 899-amino-acid polypeptide reads, in one-letter code: Protein translocase subunit SecA (899 aa).

ATP contacts are provided by residues Gln-87, 105–109, and Asp-512; that span reads GEGKT. Disordered stretches follow at residues 573 to 592 and 861 to 899; these read RRID…PGSS and ITVN…CCGK. Residues Cys-885, Cys-887, Cys-896, and Cys-897 each contribute to the Zn(2+) site.

This sequence belongs to the SecA family. Monomer and homodimer. Part of the essential Sec protein translocation apparatus which comprises SecA, SecYEG and auxiliary proteins SecDF-YajC and YidC. It depends on Zn(2+) as a cofactor.

It localises to the cell inner membrane. Its subcellular location is the cytoplasm. The enzyme catalyses ATP + H2O + cellular proteinSide 1 = ADP + phosphate + cellular proteinSide 2.. Functionally, part of the Sec protein translocase complex. Interacts with the SecYEG preprotein conducting channel. Has a central role in coupling the hydrolysis of ATP to the transfer of proteins into and across the cell membrane, serving as an ATP-driven molecular motor driving the stepwise translocation of polypeptide chains across the membrane. This is Protein translocase subunit SecA from Trichlorobacter lovleyi (strain ATCC BAA-1151 / DSM 17278 / SZ) (Geobacter lovleyi).